Reading from the N-terminus, the 375-residue chain is Arsenite methyltransferase (375 aa).

At S335 the chain carries Phosphoserine.

The protein belongs to the methyltransferase superfamily. Arsenite methyltransferase family.

Its subcellular location is the cytoplasm. The protein localises to the cytosol. The catalysed reaction is arsenic triglutathione + [thioredoxin]-dithiol + S-adenosyl-L-methionine + 2 H2O = methylarsonous acid + [thioredoxin]-disulfide + 3 glutathione + S-adenosyl-L-homocysteine + H(+). The enzyme catalyses arsenic triglutathione + 2 [thioredoxin]-dithiol + 2 S-adenosyl-L-methionine + H2O = dimethylarsinous acid + 2 [thioredoxin]-disulfide + 3 glutathione + 2 S-adenosyl-L-homocysteine + 2 H(+). It catalyses the reaction arsenic triglutathione + 3 [thioredoxin]-dithiol + 3 S-adenosyl-L-methionine = trimethylarsine + 3 [thioredoxin]-disulfide + 3 glutathione + 3 S-adenosyl-L-homocysteine + 3 H(+). Its function is as follows. Catalyzes the transfer of a methyl group from AdoMet to trivalent arsenicals producing methylated and dimethylated arsenicals. It methylates arsenite to form methylarsonate, Me-AsO(3)H(2), which is reduced by methylarsonate reductase to methylarsonite, Me-As(OH)2. Methylarsonite is also a substrate and it is converted into the much less toxic compound dimethylarsinate (cacodylate), Me(2)As(O)-OH. The sequence is that of Arsenite methyltransferase (AS3MT) from Homo sapiens (Human).